The primary structure comprises 576 residues: TRAF-type zinc finger domain-containing protein 1 (576 aa).

Ala2 is subject to N-acetylalanine. The segment at 27-103 (IHEIHCQRNI…DLELSVVKLK (77 aa)) adopts a TRAF-type zinc-finger fold. 8 positions are modified to phosphoserine: Ser278, Ser320, Ser326, Ser327, Ser409, Ser415, Ser430, and Ser450. Residues 402–432 (EGIPTQDSQPEDRSPELSRRRVKHQGDLSSG) are disordered. Basic and acidic residues predominate over residues 411–420 (PEDRSPELSR). Disordered stretches follow at residues 465 to 491 (LNSS…GSQD) and 529 to 576 (HGSP…EEEE). Residue Ser531 is modified to Phosphoserine. The segment covering 540–552 (GSRSSRVTPTAAS) has biased composition (polar residues).

In terms of assembly, interacts with MAVS, TICAM1, TRAF1, TRAF2, TRAF3 and TRAF6. As to expression, expressed in vascular smooth muscle cells.

Negative feedback regulator that controls excessive innate immune responses. Regulates both Toll-like receptor 4 (TLR4) and DDX58/RIG1-like helicases (RLH) pathways. May inhibit the LTR pathway by direct interaction with TRAF6 and attenuation of NF-kappa-B activation. May negatively regulate the RLH pathway downstream from MAVS and upstream of NF-kappa-B and IRF3. This chain is TRAF-type zinc finger domain-containing protein 1 (Trafd1), found in Rattus norvegicus (Rat).